The primary structure comprises 474 residues: Nitrosuccinate lyase (474 aa).

Ser295 (proton acceptor) is an active-site residue. The fumarate site is built by Lys301 and Asn303. Arg334 functions as the Proton donor in the catalytic mechanism.

It belongs to the class-II fumarase/aspartase family.

The enzyme catalyses 2-nitrobutanedioate = fumarate + nitrite + H(+). In terms of biological role, involved in the biosynthesis of desferrioxamine derivatives which have iron-binding properties and may act as siderophores. Catalyzes the formation of nitrous acid from nitrosuccinic acid (2-nitrobutanedioate) by elimination of its nitro group. This is Nitrosuccinate lyase from Streptomyces davaonensis (strain DSM 101723 / JCM 4913 / KCC S-0913 / 768).